Reading from the N-terminus, the 500-residue chain is L-2-amino-4-chloropent-4-enoate dechlorinase/desaturase (500 aa).

At lysine 311 the chain carries N6-(pyridoxal phosphate)lysine.

It belongs to the trans-sulfuration enzymes family. Pyridoxal 5'-phosphate serves as cofactor.

It carries out the reaction L-2-amino-4-chloropent-4-enoate = L-propargylglycine + chloride + H(+). It functions in the pathway amino-acid metabolism. Its pathway is antibiotic biosynthesis. Its function is as follows. Involved in the biosynthesis of terminal alkyne-containing amino acids such as L-propargylglycine (Pra) and L-beta-ethynylserine, that are produced as antibiotics by S.cattleya. Catalyzes gamma-elimination of chloride from 4-chloro-allyl-L-glycine (also named L-2-amino-4-chloropent-4-enoate), followed by an isomerization, to form the terminal-alkyne product L-propargylglycine. In Streptantibioticus cattleyicolor (strain ATCC 35852 / DSM 46488 / JCM 4925 / NBRC 14057 / NRRL 8057) (Streptomyces cattleya), this protein is L-2-amino-4-chloropent-4-enoate dechlorinase/desaturase.